A 114-amino-acid chain; its full sequence is Acetyltransferase At1g77540 (114 aa).

An N-acetylthreonine modification is found at T2. An N-acetyltransferase domain is found at 18-106; it reads KIVWNEGKRR…RNPSWKPLIH (89 aa). CoA is bound by residues 52–55 and 61–66; these read HTYV and GLGLAS. C87 acts as the Nucleophile in catalysis. CoA-binding positions include 88–89, T93, and R97; that span reads SY.

The protein resides in the peroxisome. Its function is as follows. Possesses in vitro histone acetyltransferase activity with histones H3 and H4. The protein is Acetyltransferase At1g77540 of Arabidopsis thaliana (Mouse-ear cress).